We begin with the raw amino-acid sequence, 515 residues long: MGSEMEPLLRAWSYFRRRKFQLCADLCTQMLEKSPYDQEPAPDLPVSQAAWILKARALTEMVYIDEIDVDQEGIAEMILDENAIAQVPRPGTSLKLPGTNQTGGPTQAVRPITQAGRPITGFLRPSTQSGRPGTMEQAIRTPRTAYTARPITSSSGRFVRLGTASMLTSPDGPFINLSRLNLTKYSQKPKLAKALFEYILHHENDVKMALDLASLSTEYSQYKDWWWKVQIGKCYYRLGMYREAEKQFKSALKQQEMVDTFLYLAKVYIILDQPVTALNLFKQGLDKFPGEVTLLCGIARIYEEMNNSSSAAEYYKEVLKQDNTHVEAIACIGSNHFYSDQPEVALRFYRRLLQMGVYNCQLFNNLGLCCFYAQQYDMTLTSFERALSLAENEEEAADVWYNLGHIAVGIGDTNLAHQCFRLALVHNNHHAEAYNNLAVLEMRKGHVEQARALLQTASSLAPHMYEPHFNFATVSDKIGDLQRSYVAAQKSEVAFPEHVDTQHLIKQLKQHFAML.

A TPR 1 repeat occupies 4 to 37; the sequence is EMEPLLRAWSYFRRRKFQLCADLCTQMLEKSPYD. 2 disordered regions span residues 89–109 and 118–137; these read RPGT…TQAV and PITG…TMEQ. TPR repeat units lie at residues 225-258, 259-291, 292-325, 326-359, 360-393, 397-430, and 432-464; these read WWWK…QEMV, DTFL…FPGE, VTLL…DNTH, VEAI…GVYN, CQLF…AENE, ADVW…NNHH, and EAYN…APHM.

Part of BBSome complex, that contains BBS1, BBS2, BBS4, BBS5, BBS7, BBS8/TTC8, BBS9 and BBIP10. Interacts with PCM1. Interacts with CCDC28B. Interacts with PKD1. Isoform 1 is retina-specific whereas isoform 2 is ubiquitously expressed.

The protein localises to the cytoplasm. The protein resides in the cytoskeleton. Its subcellular location is the microtubule organizing center. It is found in the centrosome. It localises to the centriole. The protein localises to the cell projection. The protein resides in the cilium membrane. Its subcellular location is the centriolar satellite. It is found in the cilium. The BBSome complex is thought to function as a coat complex required for sorting of specific membrane proteins to the primary cilia. The BBSome complex is required for ciliogenesis but is dispensable for centriolar satellite function. This ciliogenic function is mediated in part by the Rab8 GDP/GTP exchange factor, which localizes to the basal body and contacts the BBSome. Rab8(GTP) enters the primary cilium and promotes extension of the ciliary membrane. Firstly the BBSome associates with the ciliary membrane and binds to RAB3IP/Rabin8, the guanosyl exchange factor (GEF) for Rab8 and then the Rab8-GTP localizes to the cilium and promotes docking and fusion of carrier vesicles to the base of the ciliary membrane. The BBSome complex, together with the LTZL1, controls SMO ciliary trafficking and contributes to the sonic hedgehog (SHH) pathway regulation. Required for proper BBSome complex assembly and its ciliary localization. The chain is Tetratricopeptide repeat protein 8 (Ttc8) from Mus musculus (Mouse).